The chain runs to 130 residues: Putative F-box protein At1g77880 (130 aa).

Residues 18 to 64 (KVSIPYLPDDLLLNCLARISRLYYPTLSLVSKRFRSLLASTELYETR) enclose the F-box domain.

The sequence is that of Putative F-box protein At1g77880 from Arabidopsis thaliana (Mouse-ear cress).